Reading from the N-terminus, the 444-residue chain is uncharacterized protein (444 aa).

Lys268 is modified (N6-(pyridoxal phosphate)lysine).

The protein belongs to the class-III pyridoxal-phosphate-dependent aminotransferase family. Pyridoxal 5'-phosphate is required as a cofactor.

This is an uncharacterized protein from Bacillus subtilis (strain 168).